The following is a 213-amino-acid chain: Outer envelope pore protein 24B, chloroplastic (213 aa).

Topologically, residues methionine 1–methionine 3 are cytoplasmic. A beta stranded membrane pass occupies residues lysine 4–threonine 13. Residues aspartate 14–glycine 18 are Chloroplast intermembrane-facing. Residues isoleucine 19–aspartate 28 traverse the membrane as a beta stranded segment. The Cytoplasmic portion of the chain corresponds to isoleucine 29–arginine 32. A beta stranded transmembrane segment spans residues alanine 33–alanine 42. Over glycine 43–lysine 55 the chain is Chloroplast intermembrane. Residues proline 56 to asparagine 64 form a beta stranded membrane-spanning segment. The Cytoplasmic segment spans residues valine 65–valine 70. Residues arginine 71–isoleucine 80 traverse the membrane as a beta stranded segment. Residues alanine 81–arginine 93 lie on the Chloroplast intermembrane side of the membrane. Residues alanine 94 to serine 103 form a beta stranded membrane-spanning segment. Topologically, residues leucine 104 to serine 108 are cytoplasmic. Residues alanine 109–valine 118 traverse the membrane as a beta stranded segment. At glycine 119 to asparagine 122 the chain is on the chloroplast intermembrane side. A beta stranded transmembrane segment spans residues cysteine 123–glycine 132. The Cytoplasmic segment spans residues glycine 133–alanine 144. The beta stranded transmembrane segment at lysine 145 to phenylalanine 156 threads the bilayer. Over tyrosine 157–glycine 159 the chain is Chloroplast intermembrane. A beta stranded membrane pass occupies residues aspartate 160–threonine 168. Residues serine 169–serine 170 are Cytoplasmic-facing. The chain crosses the membrane as a beta stranded span at residues lysine 171–arginine 179. Over asparagine 180 to proline 201 the chain is Chloroplast intermembrane. The beta stranded transmembrane segment at lysine 202–leucine 211 threads the bilayer. Over glutamate 212–methionine 213 the chain is Cytoplasmic.

It belongs to the plastid outer envelope porin OEP24 (TC 1.B.28) family. As to quaternary structure, homooligomers form large rather nonselective pores in plastidial outer membranes.

It localises to the plastid. The protein localises to the etioplast membrane. It is found in the chloroplast outer membrane. High-conductance voltage-dependent solute channel with a slight selectivity for cations transporting triosephosphates, dicarboxylic acids, ATP, inorganic phosphate (Pi), sugars, and positively or negatively charged amino acids. The protein is Outer envelope pore protein 24B, chloroplastic (OEP24B) of Arabidopsis thaliana (Mouse-ear cress).